Here is a 264-residue protein sequence, read N- to C-terminus: MKAVVLAVAVLFLTGSQARHFWQQDDPQTSWDRVKDFATVYVDAIKDSGRDYVSQFESSALGQQLNLKLVDNWDTVGTTVGRLQEQLGPVTQEFWSNLEKDTDWLREEMNKDLEEVKKQVQPYLDQFQTKWQEEMEHYRQKVGPLGAELREGARQKLQDLQERLVPVGEDIRDRMRTHVDALRSNLSPYSDKMRERLAQHLAKLKDSTTLAEYRTKASNHLQTLSEKAKPALEDLRQGLTPMLESFRATIMGWIDETSKRLSTQ.

The first 18 residues, 1 to 18 (MKAVVLAVAVLFLTGSQA), serve as a signal peptide directing secretion. A run of 2 repeats spans residues 67-88 (LKLV…EQLG) and 89-110 (PVTQ…EEMN). The interval 67–264 (LKLVDNWDTV…DETSKRLSTQ (198 aa)) is 10 X approximate tandem repeats. At methionine 109 the chain carries Methionine sulfoxide. One copy of the 3; half-length repeat lies at 111 to 121 (KDLEEVKKQVQ). 3 consecutive repeat copies span residues 122-143 (PYLD…QKVG), 144-165 (PLGA…ERLV), and 166-187 (PVGE…SNLS). The 7; truncated repeat unit spans residues 188–207 (PYSDKMRERLAQHLAKLKDS). Methionine 193 carries the post-translational modification Methionine sulfoxide. Copy 8 of the repeat occupies 208 to 229 (TTLAEYRTKASNHLQTLSEKAK). One copy of the 9; half-length repeat lies at 230–240 (PALEDLRQGLT). Copy 10 of the repeat occupies 241 to 264 (PMLESFRATIMGWIDETSKRLSTQ). Residue methionine 242 is modified to Methionine sulfoxide.

The protein belongs to the apolipoprotein A1/A4/E family. In terms of assembly, homodimer. Interacts with APOA1BP and CLU. Component of a sperm activating protein complex (SPAP), consisting of APOA1, an immunoglobulin heavy chain, an immunoglobulin light chain and albumin. Interacts with NDRG1. Interacts with SCGB3A2. Interacts with NAXE and YJEFN3. Post-translationally, glycosylated. In terms of processing, palmitoylated. Phosphorylation sites are present in the extracellular medium.

The protein resides in the secreted. Participates in the reverse transport of cholesterol from tissues to the liver for excretion by promoting cholesterol efflux from tissues and by acting as a cofactor for the lecithin cholesterol acyltransferase (LCAT). As part of the SPAP complex, activates spermatozoa motility. The polypeptide is Apolipoprotein A-I (Apoa1) (Peromyscus maniculatus bairdii (Prairie deer mouse)).